The primary structure comprises 408 residues: MLLEQLRRAADERQARALTRRRRIAHTACAPHQAVGPVDAPAPQPLLTFCSNDYMGLASHPDVVAALADGARLYGAGSGASHLVSGHSLAHARLEEELARWFAPHIPQARTLYFCTGYMANMAVLTALGTAGATLFCETLNHASLIDGARLARADVQRYPHCDAAALDALLAASTSPLKLIVTDSVFSMDGDVAPLAELLALAERHDAWIIVDDAHGFGVLGDDGHGVLQALGLNSERFIYIGTLGKAAGVAGAFVAAHETIIEHLVNTARPYIYTTAAPPAVAHALMASLAIIEGEEGRQRRANLNQLIADLRAGLAPLAAAAGWELGDSATAVQPLIVGDNAVSLALSARLEAEGIRVGAIRPPTVPEGTARLRITLSATHTAADVQRLVGVLADAVPPEAKREAA.

R20 provides a ligand contact to substrate. 117–118 (GY) serves as a coordination point for pyridoxal 5'-phosphate. Substrate is bound at residue H142. Positions 188, 216, and 244 each coordinate pyridoxal 5'-phosphate. K247 carries the post-translational modification N6-(pyridoxal phosphate)lysine. Substrate is bound at residue T367.

Belongs to the class-II pyridoxal-phosphate-dependent aminotransferase family. BioF subfamily. As to quaternary structure, homodimer. The cofactor is pyridoxal 5'-phosphate.

The catalysed reaction is 6-carboxyhexanoyl-[ACP] + L-alanine + H(+) = (8S)-8-amino-7-oxononanoate + holo-[ACP] + CO2. Its pathway is cofactor biosynthesis; biotin biosynthesis. Catalyzes the decarboxylative condensation of pimeloyl-[acyl-carrier protein] and L-alanine to produce 8-amino-7-oxononanoate (AON), [acyl-carrier protein], and carbon dioxide. This is 8-amino-7-oxononanoate synthase from Cupriavidus pinatubonensis (strain JMP 134 / LMG 1197) (Cupriavidus necator (strain JMP 134)).